We begin with the raw amino-acid sequence, 828 residues long: Fibroblast growth factor receptor 4 (828 aa).

The signal sequence occupies residues 1–31; the sequence is MSGSIRRSYTAMQNFPRFLLGVLFVATLSSC. Residues 32 to 392 lie on the Extracellular side of the membrane; that stretch reads RPRLSEDEAN…AEPAESRYMD (361 aa). One can recognise an Ig-like C2-type 1 domain in the interval 33-127; it reads PRLSEDEANW…GKILRRFSIS (95 aa). A disulfide bridge connects residues C67 and C112. The N-linked (GlcNAc...) asparagine glycan is linked to N70. The tract at residues 132-156 is disordered; it reads LASGDEEEEEEDDDDEDGRREDTTA. Positions 135-147 are enriched in acidic residues; it reads GDEEEEEEDDDDE. 2 Ig-like C2-type domains span residues 169 to 259 and 272 to 372; these read PYWT…LTYT and PILQ…AWLT. Residues C194 and C247 are joined by a disulfide bond. Residues N244, N281, N313, and N345 are each glycosylated (N-linked (GlcNAc...) asparagine). A disulfide bridge connects residues C294 and C356. A helical transmembrane segment spans residues 393–413; the sequence is IIIYTSGFLAVAMAIMIVILC. The Cytoplasmic segment spans residues 414–828; sequence RMQTPHSKQT…YHNIHSQLGT (415 aa). Residues 490-777 form the Protein kinase domain; sequence LVLGKPLGEG…ILTAVSEEYL (288 aa). Residues 496 to 504 and K526 each bind ATP; that span reads LGEGCFGQV. D635 acts as the Proton acceptor in catalysis. Phosphotyrosine; by autocatalysis occurs at positions 665, 666, and 776.

The protein belongs to the protein kinase superfamily. Tyr protein kinase family. Fibroblast growth factor receptor subfamily. In terms of processing, ubiquitinated. Subject to proteasomal degradation when not fully glycosylated. Autophosphorylated. Binding of FGF family members together with heparan sulfate proteoglycan or heparin promotes receptor dimerization and autophosphorylation on tyrosine residues. Autophosphorylation occurs in trans between the two FGFR molecules present in the dimer.

It is found in the cell membrane. The protein localises to the endosome. It localises to the endoplasmic reticulum. It carries out the reaction L-tyrosyl-[protein] + ATP = O-phospho-L-tyrosyl-[protein] + ADP + H(+). With respect to regulation, present in an inactive conformation in the absence of bound ligand. Ligand binding leads to dimerization and activation by autophosphorylation on tyrosine residues. Functionally, tyrosine-protein kinase that acts as a cell-surface receptor for fibroblast growth factors and plays a role in the regulation of cell proliferation, differentiation and migration, and in regulation of lipid metabolism, bile acid biosynthesis, glucose uptake, vitamin D metabolism and phosphate homeostasis. Required for normal down-regulation of the expression of CYP7A1, the rate-limiting enzyme in bile acid synthesis, in response to FGF19. Phosphorylates PLCG1 and FRS2. Ligand binding leads to the activation of several signaling cascades. Activation of PLCG1 leads to the production of the cellular signaling molecules diacylglycerol and inositol 1,4,5-trisphosphate. Phosphorylation of FRS2 triggers recruitment of GRB2, GAB1, PIK3R1 and SOS1, and mediates activation of RAS, MAPK1/ERK2, MAPK3/ERK1 and the MAP kinase signaling pathway, as well as of the AKT1 signaling pathway. The protein is Fibroblast growth factor receptor 4 (fgfr4) of Xenopus laevis (African clawed frog).